The chain runs to 63 residues: Insect toxin TbIT-1 (63 aa).

Positions 2–63 (KEGYPVDSRG…VYDNASNKCB (62 aa)) constitute an LCN-type CS-alpha/beta domain. 4 disulfide bridges follow: cysteine 12/cysteine 62, cysteine 16/cysteine 38, cysteine 24/cysteine 43, and cysteine 28/cysteine 45.

This sequence belongs to the long (4 C-C) scorpion toxin superfamily. Sodium channel inhibitor family. Beta subfamily. In terms of tissue distribution, expressed by the venom gland.

It is found in the secreted. Functionally, beta toxins bind voltage-independently at site-4 of sodium channels (Nav) and shift the voltage of activation toward more negative potentials thereby affecting sodium channel activation and promoting spontaneous and repetitive firing. This toxin is only active against insects. This Tityus bahiensis (Brazilian scorpion) protein is Insect toxin TbIT-1.